A 606-amino-acid polypeptide reads, in one-letter code: NADH-ubiquinone oxidoreductase chain 5 (606 aa).

The next 16 membrane-spanning stretches (helical) occupy residues 4–24 (FSSL…AINF), 43–63 (AFIT…EMII), 84–104 (FFSM…MEFS), 114–134 (INQF…LVTA), 140–160 (LFIG…WWYG), 171–191 (AILY…WFLI), 213–233 (LMGL…HPWL), 241–261 (TPVS…FLLI), 272–292 (FGQS…AMCA), 301–320 (IIAF…IGIN), 325–347 (AFLH…GSII), 366–386 (MPFT…MPFL), 413–433 (LVAT…ALLG), 457–477 (LLIG…PMTI), 485–505 (YLKM…LEIS), and 582–602 (GLIK…TTLL).

This sequence belongs to the complex I subunit 5 family. As to quaternary structure, core subunit of respiratory chain NADH dehydrogenase (Complex I) which is composed of 45 different subunits.

The protein localises to the mitochondrion inner membrane. The catalysed reaction is a ubiquinone + NADH + 5 H(+)(in) = a ubiquinol + NAD(+) + 4 H(+)(out). Core subunit of the mitochondrial membrane respiratory chain NADH dehydrogenase (Complex I) which catalyzes electron transfer from NADH through the respiratory chain, using ubiquinone as an electron acceptor. Essential for the catalytic activity and assembly of complex I. This is NADH-ubiquinone oxidoreductase chain 5 (MT-ND5) from Ovis aries (Sheep).